Consider the following 263-residue polypeptide: Phosphatidylglycerol--prolipoprotein diacylglyceryl transferase (263 aa).

A run of 4 helical transmembrane segments spans residues 10 to 30 (VAIT…LFGF), 56 to 76 (MVTY…ILFY), 91 to 111 (IWNG…AMWL), and 117 to 137 (GLGF…GLFF). Arg139 lines the a 1,2-diacyl-sn-glycero-3-phospho-(1'-sn-glycerol) pocket. The next 3 helical transmembrane spans lie at 171–191 (PSQL…LWVF), 199–219 (GHVS…VEFV), and 231–251 (FGWL…GLWL).

It belongs to the Lgt family.

The protein resides in the cell inner membrane. The enzyme catalyses L-cysteinyl-[prolipoprotein] + a 1,2-diacyl-sn-glycero-3-phospho-(1'-sn-glycerol) = an S-1,2-diacyl-sn-glyceryl-L-cysteinyl-[prolipoprotein] + sn-glycerol 1-phosphate + H(+). It functions in the pathway protein modification; lipoprotein biosynthesis (diacylglyceryl transfer). In terms of biological role, catalyzes the transfer of the diacylglyceryl group from phosphatidylglycerol to the sulfhydryl group of the N-terminal cysteine of a prolipoprotein, the first step in the formation of mature lipoproteins. The chain is Phosphatidylglycerol--prolipoprotein diacylglyceryl transferase from Nitratidesulfovibrio vulgaris (strain ATCC 29579 / DSM 644 / CCUG 34227 / NCIMB 8303 / VKM B-1760 / Hildenborough) (Desulfovibrio vulgaris).